The sequence spans 254 residues: DNA repair protein RecO (254 aa).

This sequence belongs to the RecO family.

Involved in DNA repair and RecF pathway recombination. This is DNA repair protein RecO from Gluconacetobacter diazotrophicus (strain ATCC 49037 / DSM 5601 / CCUG 37298 / CIP 103539 / LMG 7603 / PAl5).